Here is a 132-residue protein sequence, read N- to C-terminus: Large ribosomal subunit protein bL17 (132 aa).

Belongs to the bacterial ribosomal protein bL17 family. In terms of assembly, part of the 50S ribosomal subunit. Contacts protein L32.

This Ruthia magnifica subsp. Calyptogena magnifica protein is Large ribosomal subunit protein bL17.